The sequence spans 670 residues: Transketolase, plasmid (670 aa).

H32 lines the substrate pocket. Thiamine diphosphate is bound by residues H72 and G120–L122. Residue D161 participates in Mg(2+) binding. Residues G162 and N191 each contribute to the thiamine diphosphate site. Positions 191 and 193 each coordinate Mg(2+). Substrate contacts are provided by H267, R364, and S391. H267 serves as a coordination point for thiamine diphosphate. E417 acts as the Proton donor in catalysis. F443 contributes to the thiamine diphosphate binding site. Substrate contacts are provided by H467, D475, and R526.

The protein belongs to the transketolase family. In terms of assembly, homodimer. Requires Mg(2+) as cofactor. Ca(2+) is required as a cofactor. It depends on Mn(2+) as a cofactor. Co(2+) serves as cofactor. The cofactor is thiamine diphosphate.

The catalysed reaction is D-sedoheptulose 7-phosphate + D-glyceraldehyde 3-phosphate = aldehydo-D-ribose 5-phosphate + D-xylulose 5-phosphate. Its pathway is carbohydrate biosynthesis; Calvin cycle. Functionally, catalyzes the transfer of a two-carbon ketol group from a ketose donor to an aldose acceptor, via a covalent intermediate with the cofactor thiamine pyrophosphate. The chain is Transketolase, plasmid (cbbTP) from Cupriavidus necator (strain ATCC 17699 / DSM 428 / KCTC 22496 / NCIMB 10442 / H16 / Stanier 337) (Ralstonia eutropha).